The chain runs to 90 residues: uncharacterized protein (90 aa).

2 consecutive transmembrane segments (helical) span residues 23–43 and 48–68; these read ITTI…VGLF and VTLL…IIGF.

It is found in the cell membrane. This is an uncharacterized protein from Rickettsia prowazekii (strain Madrid E).